The chain runs to 688 residues: Translation initiation factor IF-2 (688 aa).

Basic and acidic residues-rich tracts occupy residues 53-62 (GKEKSEKTKE) and 86-95 (KRDDKNEKVN). A disordered region spans residues 53-100 (GKEKSEKTKEEDDEIETTAKNPIKESMNNKKSNKRDDKNEKVNTENAE). Residues 187-354 (KRSPIITVMG…MILLSSEILE (168 aa)) form the tr-type G domain. The tract at residues 196 to 203 (GHVDHGKT) is G1. Residue 196 to 203 (GHVDHGKT) participates in GTP binding. Residues 221–225 (GITQH) form a G2 region. The segment at 242 to 245 (DTPG) is G3. Residues 242–246 (DTPGH) and 296–299 (NKID) each bind GTP. The G4 stretch occupies residues 296–299 (NKID). Positions 332-334 (SAH) are G5.

The protein belongs to the TRAFAC class translation factor GTPase superfamily. Classic translation factor GTPase family. IF-2 subfamily.

The protein resides in the cytoplasm. One of the essential components for the initiation of protein synthesis. Protects formylmethionyl-tRNA from spontaneous hydrolysis and promotes its binding to the 30S ribosomal subunits. Also involved in the hydrolysis of GTP during the formation of the 70S ribosomal complex. This chain is Translation initiation factor IF-2, found in Clostridium botulinum (strain Kyoto / Type A2).